Consider the following 162-residue polypeptide: Auxin-responsive protein SAUR36 (162 aa).

Belongs to the ARG7 family. Expressed in embryo, endosperm, growing hypocotyls and shoot apical meristems.

Acts a positive regulator of leaf senescence and may mediate auxin-induced leaf senescence. Plays a role in the regulation of seed germination by gibberellins and abscisic acid (ABA). Plays a role in the regulation of light-dependent hypocotyl elongation. The chain is Auxin-responsive protein SAUR36 from Arabidopsis thaliana (Mouse-ear cress).